Reading from the N-terminus, the 839-residue chain is Protein translocase subunit SecA (839 aa).

ATP-binding positions include glutamine 85, 103–107 (GEGKT), and aspartate 493. Over residues 780 to 790 (QIHEQERERAS) the composition is skewed to basic and acidic residues. The segment at 780 to 839 (QIHEQERERASQRATTAAPQNIQSQQSANTDDLPKVERNEACPCGSGKKFKNCHGRKSFS) is disordered. Polar residues predominate over residues 791-809 (QRATTAAPQNIQSQQSANT). The Zn(2+) site is built by cysteine 821, cysteine 823, cysteine 832, and histidine 833. The span at 827–839 (KKFKNCHGRKSFS) shows a compositional bias: basic residues.

The protein belongs to the SecA family. Monomer and homodimer. Part of the essential Sec protein translocation apparatus which comprises SecA, SecYEG and auxiliary proteins SecDF. Other proteins may also be involved. It depends on Zn(2+) as a cofactor.

The protein resides in the cell membrane. The protein localises to the cytoplasm. It carries out the reaction ATP + H2O + cellular proteinSide 1 = ADP + phosphate + cellular proteinSide 2.. Functionally, part of the Sec protein translocase complex. Interacts with the SecYEG preprotein conducting channel. Has a central role in coupling the hydrolysis of ATP to the transfer of proteins into and across the cell membrane, serving as an ATP-driven molecular motor driving the stepwise translocation of polypeptide chains across the membrane. This chain is Protein translocase subunit SecA, found in Streptococcus pyogenes serotype M6 (strain ATCC BAA-946 / MGAS10394).